The sequence spans 259 residues: tRNA-cytidine(32) 2-sulfurtransferase (259 aa).

A PP-loop motif motif is present at residues 40–45 (SGGKDS). 3 residues coordinate [4Fe-4S] cluster: Cys-114, Cys-117, and Cys-205.

Belongs to the TtcA family. As to quaternary structure, homodimer. Mg(2+) serves as cofactor. Requires [4Fe-4S] cluster as cofactor.

It is found in the cytoplasm. The catalysed reaction is cytidine(32) in tRNA + S-sulfanyl-L-cysteinyl-[cysteine desulfurase] + AH2 + ATP = 2-thiocytidine(32) in tRNA + L-cysteinyl-[cysteine desulfurase] + A + AMP + diphosphate + H(+). Its pathway is tRNA modification. Catalyzes the ATP-dependent 2-thiolation of cytidine in position 32 of tRNA, to form 2-thiocytidine (s(2)C32). The sulfur atoms are provided by the cysteine/cysteine desulfurase (IscS) system. This Bdellovibrio bacteriovorus (strain ATCC 15356 / DSM 50701 / NCIMB 9529 / HD100) protein is tRNA-cytidine(32) 2-sulfurtransferase.